The primary structure comprises 165 residues: Large ribosomal subunit protein uL10 (165 aa).

The protein belongs to the universal ribosomal protein uL10 family. As to quaternary structure, part of the ribosomal stalk of the 50S ribosomal subunit. The N-terminus interacts with L11 and the large rRNA to form the base of the stalk. The C-terminus forms an elongated spine to which L12 dimers bind in a sequential fashion forming a multimeric L10(L12)X complex.

Functionally, forms part of the ribosomal stalk, playing a central role in the interaction of the ribosome with GTP-bound translation factors. The sequence is that of Large ribosomal subunit protein uL10 from Borrelia turicatae (strain 91E135).